Here is a 180-residue protein sequence, read N- to C-terminus: UPF0340 protein LACR_0494 (180 aa).

The protein belongs to the UPF0340 family.

The chain is UPF0340 protein LACR_0494 from Lactococcus lactis subsp. cremoris (strain SK11).